A 346-amino-acid chain; its full sequence is Sulfate/thiosulfate import ATP-binding protein CysA (346 aa).

One can recognise an ABC transporter domain in the interval 3–237 (VRVANVRKEF…PNSPFVYGFI (235 aa)). 35–42 (GPSGSGKT) provides a ligand contact to ATP.

Belongs to the ABC transporter superfamily. Sulfate/tungstate importer (TC 3.A.1.6) family. As to quaternary structure, the complex is composed of two ATP-binding proteins (CysA), two transmembrane proteins (CysT and CysW) and a solute-binding protein (CysP).

It is found in the cell inner membrane. The catalysed reaction is sulfate(out) + ATP + H2O = sulfate(in) + ADP + phosphate + H(+). The enzyme catalyses thiosulfate(out) + ATP + H2O = thiosulfate(in) + ADP + phosphate + H(+). Its function is as follows. Part of the ABC transporter complex CysAWTP involved in sulfate/thiosulfate import. Responsible for energy coupling to the transport system. The sequence is that of Sulfate/thiosulfate import ATP-binding protein CysA from Mesorhizobium japonicum (strain LMG 29417 / CECT 9101 / MAFF 303099) (Mesorhizobium loti (strain MAFF 303099)).